The following is a 1015-amino-acid chain: GTPase-activating Rap/Ran-GAP domain-like protein 3 (1015 aa).

Positions 200-416 constitute a Rap-GAP domain; the sequence is LLVLEEQEGS…RTLDMLIRSL (217 aa). One can recognise a CNH domain in the interval 498 to 812; it reads PYDIVCGDSW…QLTASRSDIY (315 aa). Disordered regions lie at residues 821–842 and 924–1004; these read SASN…PTGY and ELLG…FTFS. Positions 823–835 are enriched in low complexity; the sequence is SNCSSRDTSSQSS. Positions 949 to 959 are enriched in basic and acidic residues; sequence KNKEEEQKRTA.

This sequence belongs to the GARNL3 family.

The sequence is that of GTPase-activating Rap/Ran-GAP domain-like protein 3 (garnl3) from Danio rerio (Zebrafish).